Reading from the N-terminus, the 273-residue chain is 4-hydroxy-tetrahydrodipicolinate reductase (273 aa).

12-17 (GAMGRM) is a binding site for NAD(+). K39 provides a ligand contact to NADP(+). Residues 102-104 (GTT) and 126-129 (ASNF) each bind NAD(+). The active-site Proton donor/acceptor is H159. H160 contributes to the (S)-2,3,4,5-tetrahydrodipicolinate binding site. Residue K163 is the Proton donor of the active site. 169–170 (GT) serves as a coordination point for (S)-2,3,4,5-tetrahydrodipicolinate.

It belongs to the DapB family. In terms of assembly, homotetramer.

Its subcellular location is the cytoplasm. The catalysed reaction is (S)-2,3,4,5-tetrahydrodipicolinate + NAD(+) + H2O = (2S,4S)-4-hydroxy-2,3,4,5-tetrahydrodipicolinate + NADH + H(+). It catalyses the reaction (S)-2,3,4,5-tetrahydrodipicolinate + NADP(+) + H2O = (2S,4S)-4-hydroxy-2,3,4,5-tetrahydrodipicolinate + NADPH + H(+). The protein operates within amino-acid biosynthesis; L-lysine biosynthesis via DAP pathway; (S)-tetrahydrodipicolinate from L-aspartate: step 4/4. Functionally, catalyzes the conversion of 4-hydroxy-tetrahydrodipicolinate (HTPA) to tetrahydrodipicolinate. The protein is 4-hydroxy-tetrahydrodipicolinate reductase of Buchnera aphidicola subsp. Schizaphis graminum (strain Sg).